Here is a 385-residue protein sequence, read N- to C-terminus: Galactokinase (385 aa).

Position 34-37 (34-37) interacts with substrate; it reads EHTD. Residue 124 to 130 participates in ATP binding; the sequence is SSGLSSS. Residues Ser130 and Glu162 each contribute to the Mg(2+) site. Asp174 (proton acceptor) is an active-site residue. Position 223 (Tyr223) interacts with substrate.

It belongs to the GHMP kinase family. GalK subfamily.

It is found in the cytoplasm. It carries out the reaction alpha-D-galactose + ATP = alpha-D-galactose 1-phosphate + ADP + H(+). It participates in carbohydrate metabolism; galactose metabolism. In terms of biological role, catalyzes the transfer of the gamma-phosphate of ATP to D-galactose to form alpha-D-galactose-1-phosphate (Gal-1-P). The protein is Galactokinase of Mannheimia succiniciproducens (strain KCTC 0769BP / MBEL55E).